A 255-amino-acid polypeptide reads, in one-letter code: Myogenic factor 5 (255 aa).

One can recognise a bHLH domain in the interval 83–134 (DRRKAATMRERRRLKKVNQAFETLKRCTTTNPNQRLPKVEILRNAIQYIESL). The span at 221-242 (SLPIPDSITPSPTSSTDSLPRS) shows a compositional bias: low complexity. The disordered stretch occupies residues 221-246 (SLPIPDSITPSPTSSTDSLPRSPDAH).

Efficient DNA binding requires dimerization with another bHLH protein.

It localises to the nucleus. In terms of biological role, acts as a transcriptional activator that promotes transcription of muscle-specific target genes and plays a role in muscle differentiation. Induces fibroblasts to differentiate into myoblasts. Probable sequence specific DNA-binding protein. The chain is Myogenic factor 5 (myf5) from Xenopus laevis (African clawed frog).